The primary structure comprises 172 residues: Adenylate kinase isoenzyme 6 (172 aa).

Residues G13, G15, K16, T17, and T18 each coordinate ATP. Residues 33–56 (NVGDLAREGQLYDGYDEEYGCPIL) are NMPbind. Residues 108–118 (TRGYNEKKLQD) are LID. An ATP-binding site is contributed by R109.

It belongs to the adenylate kinase family. AK6 subfamily. As to quaternary structure, monomer and homodimer. Interacts with small ribosomal subunit protein uS11. Not a structural component of 43S pre-ribosomes, but transiently interacts with them by binding to uS11. Interacts with COIL (via C-terminus).

Its subcellular location is the cytoplasm. It is found in the nucleus. It localises to the nucleoplasm. The protein localises to the cajal body. It carries out the reaction AMP + ATP = 2 ADP. The enzyme catalyses ATP + H2O = ADP + phosphate + H(+). Functionally, broad-specificity nucleoside monophosphate (NMP) kinase that catalyzes the reversible transfer of the terminal phosphate group between nucleoside triphosphates and monophosphates. Also has ATPase activity. Involved in the late cytoplasmic maturation steps of the 40S ribosomal particles, specifically 18S rRNA maturation. While NMP activity is not required for ribosome maturation, ATPase activity is. Associates transiently with small ribosomal subunit protein uS11. ATP hydrolysis breaks the interaction with uS11. May temporarily remove uS11 from the ribosome to enable a conformational change of the ribosomal RNA that is needed for the final maturation step of the small ribosomal subunit. Its NMP activity may have a role in nuclear energy homeostasis. May be involved in regulation of Cajal body (CB) formation. The sequence is that of Adenylate kinase isoenzyme 6 from Mus musculus (Mouse).